A 345-amino-acid chain; its full sequence is Phosphoribosylformylglycinamidine cyclo-ligase (345 aa).

This sequence belongs to the AIR synthase family.

It is found in the cytoplasm. It carries out the reaction 2-formamido-N(1)-(5-O-phospho-beta-D-ribosyl)acetamidine + ATP = 5-amino-1-(5-phospho-beta-D-ribosyl)imidazole + ADP + phosphate + H(+). The protein operates within purine metabolism; IMP biosynthesis via de novo pathway; 5-amino-1-(5-phospho-D-ribosyl)imidazole from N(2)-formyl-N(1)-(5-phospho-D-ribosyl)glycinamide: step 2/2. This is Phosphoribosylformylglycinamidine cyclo-ligase from Klebsiella pneumoniae (strain 342).